The following is a 676-amino-acid chain: Rho guanine nucleotide exchange factor 37 (676 aa).

Residues 1-26 form a disordered region; the sequence is MADFETDEASSKSESPEQEGQGSEDK. Residues 30–213 form the DH domain; sequence HQRLAIRELI…QDVNSNINEY (184 aa). Residues 254–455 enclose the BAR domain; the sequence is LKQEAGLVPR…LPHRHVSEPD (202 aa). 2 consecutive SH3 domains span residues 506-569 and 603-666; these read GPGK…LYHP and PTMS…RTPS. Disordered regions lie at residues 568-601 and 657-676; these read HPIN…SVPT and PSNF…NLPS.

Its function is as follows. May act as a guanine nucleotide exchange factor (GEF). This Rattus norvegicus (Rat) protein is Rho guanine nucleotide exchange factor 37 (Arhgef37).